We begin with the raw amino-acid sequence, 769 residues long: Elongation factor G, mitochondrial (769 aa).

A mitochondrion-targeting transit peptide spans 1–42; it reads MSKFLRGISSISSASLKARASNFGVFHGVCSARNLHQSRLCL. Residues 74 to 356 form the tr-type G domain; that stretch reads TRLRNIGVSA…AVVDYLPQPN (283 aa). GTP-binding positions include 83-90, 154-158, and 208-211; these read AHIDSGKT, DTPGH, and NKMD.

Belongs to the TRAFAC class translation factor GTPase superfamily. Classic translation factor GTPase family. EF-G/EF-2 subfamily.

Its subcellular location is the mitochondrion. Its pathway is protein biosynthesis; polypeptide chain elongation. Functionally, mitochondrial GTPase that catalyzes the GTP-dependent ribosomal translocation step during translation elongation. During this step, the ribosome changes from the pre-translocational (PRE) to the post-translocational (POST) state as the newly formed A-site-bound peptidyl-tRNA and P-site-bound deacylated tRNA move to the P and E sites, respectively. Catalyzes the coordinated movement of the two tRNA molecules, the mRNA and conformational changes in the ribosome. The sequence is that of Elongation factor G, mitochondrial from Debaryomyces hansenii (strain ATCC 36239 / CBS 767 / BCRC 21394 / JCM 1990 / NBRC 0083 / IGC 2968) (Yeast).